We begin with the raw amino-acid sequence, 600 residues long: Oligopeptide-binding protein OppA (600 aa).

The signal sequence occupies residues 1–22 (MNKLKVTLLASSVVLAATLLSA). Cys23 carries N-palmitoyl cysteine lipidation. Cys23 carries S-diacylglycerol cysteine lipidation.

This sequence belongs to the bacterial solute-binding protein 5 family. The complex is composed of two ATP-binding proteins (OppD and OppF), two transmembrane proteins (OppB and OppC) and a solute-binding protein (OppA).

It is found in the cell membrane. Part of the ABC transporter complex OppABCDF involved in the uptake of oligopeptides. The protein is Oligopeptide-binding protein OppA of Lactococcus lactis subsp. cremoris (strain SK11).